Here is a 461-residue protein sequence, read N- to C-terminus: Porin AaxA (461 aa).

The N-terminal stretch at 1-22 is a signal peptide; that stretch reads MSFRSVLLTALLSLSFTTTMQA.

This sequence belongs to the OprB family.

It localises to the cell outer membrane. Its function is as follows. Facilitates L-arginine uptake, as part of the AaxABC system. The arginine uptake by the bacterium in the macrophage may be a virulence factor against the host innate immune response. The polypeptide is Porin AaxA (aaxA) (Chlamydia trachomatis serovar L2 (strain ATCC VR-902B / DSM 19102 / 434/Bu)).